The sequence spans 411 residues: S-adenosylmethionine synthase (411 aa).

ATP is bound at residue His-15. Position 17 (Asp-17) interacts with Mg(2+). Glu-43 is a K(+) binding site. 2 residues coordinate L-methionine: Glu-56 and Gln-100. The interval 100–110 (QSPDIAQGVNE) is flexible loop. ATP is bound by residues 171-173 (DGK), 248-249 (KF), Asp-257, 263-264 (RK), Ala-280, and Lys-284. Asp-257 contacts L-methionine. Position 288 (Lys-288) interacts with L-methionine.

This sequence belongs to the AdoMet synthase family. As to quaternary structure, homotetramer; dimer of dimers. Requires Mg(2+) as cofactor. The cofactor is K(+).

Its subcellular location is the cytoplasm. It carries out the reaction L-methionine + ATP + H2O = S-adenosyl-L-methionine + phosphate + diphosphate. The protein operates within amino-acid biosynthesis; S-adenosyl-L-methionine biosynthesis; S-adenosyl-L-methionine from L-methionine: step 1/1. Its function is as follows. Catalyzes the formation of S-adenosylmethionine (AdoMet) from methionine and ATP. The overall synthetic reaction is composed of two sequential steps, AdoMet formation and the subsequent tripolyphosphate hydrolysis which occurs prior to release of AdoMet from the enzyme. This is S-adenosylmethionine synthase from Synechococcus sp. (strain CC9605).